Reading from the N-terminus, the 251-residue chain is Capsid protein (251 aa).

Residues methionine 1 to lysine 35 are disordered. The Bipartite nuclear localization signal signature appears at lysine 3–serine 20. Positions serine 15–lysine 35 are enriched in polar residues. Residues lysine 35 to arginine 49 carry the Nuclear localization signal motif. The segment at tyrosine 54–serine 71 is a zinc-finger region. A Nuclear export signal motif is present at residues isoleucine 96–methionine 117. The Bipartite nuclear localization signal motif lies at arginine 195–arginine 242.

It belongs to the geminiviridae capsid protein family. Homomultimer. Binds to single-stranded and double-stranded viral DNA. Interacts (via nuclear localization signals) with host importin alpha-1a.

It localises to the virion. It is found in the host nucleus. In terms of biological role, encapsidates the viral DNA into characteristic twinned ('geminate') particles. Binds the genomic viral ssDNA and shuttles it into and out of the cell nucleus. The CP of bipartite geminiviruses is not required for cell-to-cell or systemic movement. In Macroptilium lathyroides (Lima bean), this protein is Capsid protein.